Consider the following 234-residue polypeptide: Orotate phosphoribosyltransferase (234 aa).

K30 contributes to the 5-phospho-alpha-D-ribose 1-diphosphate binding site. Position 38–39 (38–39 (FF)) interacts with orotate. 5-phospho-alpha-D-ribose 1-diphosphate-binding positions include 80-81 (YK), R110, K111, K114, H116, and 136-144 (DDVITAGTA). 2 residues coordinate orotate: T140 and R168.

It belongs to the purine/pyrimidine phosphoribosyltransferase family. PyrE subfamily. Homodimer.

The enzyme catalyses orotidine 5'-phosphate + diphosphate = orotate + 5-phospho-alpha-D-ribose 1-diphosphate. It functions in the pathway pyrimidine metabolism; UMP biosynthesis via de novo pathway; UMP from orotate: step 1/2. Catalyzes the transfer of a ribosyl phosphate group from 5-phosphoribose 1-diphosphate to orotate, leading to the formation of orotidine monophosphate (OMP). The sequence is that of Orotate phosphoribosyltransferase (URA5) from Metarhizium anisopliae (Entomophthora anisopliae).